We begin with the raw amino-acid sequence, 88 residues long: Large ribosomal subunit protein uL29 (88 aa).

Belongs to the universal ribosomal protein uL29 family.

This Sulfurisphaera tokodaii (strain DSM 16993 / JCM 10545 / NBRC 100140 / 7) (Sulfolobus tokodaii) protein is Large ribosomal subunit protein uL29 (rpl29).